Here is a 332-residue protein sequence, read N- to C-terminus: D-xylose-binding periplasmic protein (332 aa).

An N-terminal signal peptide occupies residues 1-23 (MKIKSALLTLVGALTVFSSSAHS).

It belongs to the bacterial solute-binding protein 2 family.

Its subcellular location is the periplasm. In terms of biological role, involved in the high-affinity D-xylose membrane transport system. Binds with high affinity to xylose. This chain is D-xylose-binding periplasmic protein (xylF), found in Haemophilus influenzae (strain ATCC 51907 / DSM 11121 / KW20 / Rd).